Consider the following 278-residue polypeptide: S-adenosylmethionine decarboxylase proenzyme (278 aa).

Positions 96–115 (LTPESLTGESPGPLPGNKPS) are disordered. S126 functions as the Schiff-base intermediate with substrate; via pyruvic acid in the catalytic mechanism. Pyruvic acid (Ser); by autocatalysis is present on S126. The active-site Proton acceptor; for processing activity is the H131. C154 (proton donor; for catalytic activity) is an active-site residue.

It belongs to the prokaryotic AdoMetDC family. Type 2 subfamily. In terms of assembly, heterooctamer of four alpha and four beta chains arranged as a tetramer of alpha/beta heterodimers. Pyruvate is required as a cofactor. Is synthesized initially as an inactive proenzyme. Formation of the active enzyme involves a self-maturation process in which the active site pyruvoyl group is generated from an internal serine residue via an autocatalytic post-translational modification. Two non-identical subunits are generated from the proenzyme in this reaction, and the pyruvate is formed at the N-terminus of the alpha chain, which is derived from the carboxyl end of the proenzyme. The post-translation cleavage follows an unusual pathway, termed non-hydrolytic serinolysis, in which the side chain hydroxyl group of the serine supplies its oxygen atom to form the C-terminus of the beta chain, while the remainder of the serine residue undergoes an oxidative deamination to produce ammonia and the pyruvoyl group blocking the N-terminus of the alpha chain.

It catalyses the reaction S-adenosyl-L-methionine + H(+) = S-adenosyl 3-(methylsulfanyl)propylamine + CO2. It participates in amine and polyamine biosynthesis; S-adenosylmethioninamine biosynthesis; S-adenosylmethioninamine from S-adenosyl-L-methionine: step 1/1. Catalyzes the decarboxylation of S-adenosylmethionine to S-adenosylmethioninamine (dcAdoMet), the propylamine donor required for the synthesis of the polyamines spermine and spermidine from the diamine putrescine. This is S-adenosylmethionine decarboxylase proenzyme from Alkaliphilus metalliredigens (strain QYMF).